The following is a 183-amino-acid chain: Putative 3-methyladenine DNA glycosylase (183 aa).

Belongs to the DNA glycosylase MPG family.

The chain is Putative 3-methyladenine DNA glycosylase from Rickettsia peacockii (strain Rustic).